Reading from the N-terminus, the 197-residue chain is RNA chaperone ProQ (197 aa).

Residues 115 to 138 are disordered; that stretch reads RAAAKKAQQKKHPRKPANKNLKKE. The segment covering 117–131 has biased composition (basic residues); it reads AAKKAQQKKHPRKPA.

It belongs to the ProQ family.

It localises to the cytoplasm. Functionally, RNA chaperone with significant RNA binding, RNA strand exchange and RNA duplexing activities. This chain is RNA chaperone ProQ, found in Haemophilus influenzae (strain ATCC 51907 / DSM 11121 / KW20 / Rd).